The chain runs to 246 residues: Exosome complex component SKI6 (246 aa).

This sequence belongs to the RNase PH family. In terms of assembly, component of the RNA exosome complex. Specifically part of the catalytically inactive RNA exosome core complex (Exo-9) which may associate with the catalytic subunits RRP6 and DIS3 in cytoplasmic- and nuclear-specific RNA exosome complex forms. Exo-9 is formed by a hexameric base ring of RNase PH domain-containing subunits and a cap ring consisting of CSL4, RRP4 and RRP40.

The protein localises to the cytoplasm. It is found in the nucleus. Its subcellular location is the nucleolus. Functionally, non-catalytic component of the RNA exosome complex which has 3'-&gt;5' exoribonuclease activity and participates in a multitude of cellular RNA processing and degradation events. In the nucleus, the RNA exosome complex is involved in proper maturation of stable RNA species such as rRNA, snRNA and snoRNA, in the elimination of RNA processing by-products and non-coding 'pervasive' transcripts, such as antisense RNA species and cryptic unstable transcripts (CUTs), and of mRNAs with processing defects, thereby limiting or excluding their export to the cytoplasm. In the cytoplasm, the RNA exosome complex is involved in general mRNA turnover and in RNA surveillance pathways, preventing translation of aberrant mRNAs. The catalytic inactive RNA exosome core complex of 9 subunits (Exo-9) is proposed to play a pivotal role in the binding and presentation of RNA for ribonucleolysis, and to serve as a scaffold for the association with catalytic subunits and accessory proteins or complexes. SKI6 is part of the hexameric ring of RNase PH domain-containing subunits proposed to form a central channel which threads RNA substrates for degradation. The protein is Exosome complex component SKI6 (SKI6) of Saccharomyces cerevisiae (strain ATCC 204508 / S288c) (Baker's yeast).